We begin with the raw amino-acid sequence, 344 residues long: Cinnamoyl-CoA reductase 1 (344 aa).

Ser-7 carries the post-translational modification Phosphoserine. Residues 17-23, Arg-42, Lys-48, 68-69, 88-90, Tyr-161, Lys-165, 188-191, and Ser-203 each bind NADP(+); these read GAGGYIA, DL, TAS, and PVLV. The cysteines at positions 154 and 162 are disulfide-linked. The active-site Proton donor is the Lys-165. Residues 317–344 form a disordered region; it reads QEKGHLAPPPPPPSASQESVENGIKIGS.

Belongs to the NAD(P)-dependent epimerase/dehydratase family. Dihydroflavonol-4-reductase subfamily. In terms of tissue distribution, expressed in leaves, stems and flowers.

The catalysed reaction is (E)-cinnamaldehyde + NADP(+) + CoA = (E)-cinnamoyl-CoA + NADPH + H(+). It functions in the pathway aromatic compound metabolism; phenylpropanoid biosynthesis. Involved in the latter stages of lignin biosynthesis. Catalyzes one of the last steps of monolignol biosynthesis, the conversion of cinnamoyl-CoAs into their corresponding cinnamaldehydes. This chain is Cinnamoyl-CoA reductase 1, found in Arabidopsis thaliana (Mouse-ear cress).